The sequence spans 450 residues: Bifunctional apoptosis regulator (450 aa).

The interval 1 to 24 (MEEPQKNDLSMRGQEEDHPVRSSG) is disordered. Over 1 to 140 (MEEPQKNDLS…PSTGRVNQQR (140 aa)) the chain is Cytoplasmic. The segment at 34-74 (CHCCYDTLVNPTTLNCGHSFCRHCLALWWMSSKKTECPECR) adopts an RING-type zinc-finger fold. Residues 141 to 161 (GGGFFSGVLTALTGVAVILLV) traverse the membrane as a helical segment. At 162–331 (YHWRSRESEH…REPTWKQWRE (170 aa)) the chain is on the extracellular side. The SAM domain maps to 182 to 249 (WTTEEVVLWL…LMELERVRAL (68 aa)). An N-linked (GlcNAc...) asparagine glycan is attached at asparagine 232. A helical transmembrane segment spans residues 332–352 (FLIKYSFLPYQLIAEFAWDWL). At 353–360 (EVHYWTSR) the chain is on the cytoplasmic side. A helical membrane pass occupies residues 361-381 (FLIVNAMLLSVLELFSFWRIW). The Extracellular portion of the chain corresponds to 382–404 (SRSELKTVPQRMWSHFWKVSTQG). The chain crosses the membrane as a helical span at residues 405–425 (LFMAMFWPLIPQFVCNCLFYW). The Cytoplasmic segment spans residues 426–450 (ALYFNPIINIDLVVKEIRRLETQVF).

Interacts with CASP8, BCL2 and BCL2L1 through SAM domain and also with HIP1, IFT57, ESRRBL1 and BCAP31. Interacts with NGFR; this interaction inhibits NF-kappa-B and JNK-related signaling pathways. Post-translationally, mediates RING-dependent self-ubiquitination leading to proteasomal degradation.

It localises to the endoplasmic reticulum membrane. The catalysed reaction is S-ubiquitinyl-[E2 ubiquitin-conjugating enzyme]-L-cysteine + [acceptor protein]-L-lysine = [E2 ubiquitin-conjugating enzyme]-L-cysteine + N(6)-ubiquitinyl-[acceptor protein]-L-lysine.. In terms of biological role, membrane-bound E3 ubiquitin ligase that plays a role in several processes including apoptosis regulation or reticulum endoplasmic stress. Has anti-apoptotic activity, both for apoptosis triggered via death-receptors and via mitochondrial factors. Contributes to the dynamic control of IRE1/ERN1 signaling during ER stress by inducing BAX inhibitor 1/TMBIM6 proteasomal degradation. Promotes the activation of TGF-beta signaling by mediating the 'Lys-63'-linked ubiquitination of TGFBR1 which is critical to activate the pathway. Together with NGFR, negatively regulates NF-kappa-B and JNK-related signaling pathways. Promotes the proteasome-mediated degradation of PNPLA3, a protein involveld in lipid metabolism. The protein is Bifunctional apoptosis regulator (Bfar) of Rattus norvegicus (Rat).